Reading from the N-terminus, the 460-residue chain is tRNA modification GTPase MnmE (460 aa).

The (6S)-5-formyl-5,6,7,8-tetrahydrofolate site is built by Arg-23, Glu-86, and Arg-126. Residues 222–381 form the TrmE-type G domain; sequence GLSTAIIGRP…LEAAIASLFF (160 aa). K(+) is bound at residue Asn-232. Residues 232 to 237, 251 to 257, and 276 to 279 each bind GTP; these read NVGKSS, TDIAGTT, and DTAG. A Mg(2+)-binding site is contributed by Ser-236. Positions 251, 253, and 256 each coordinate K(+). Thr-257 provides a ligand contact to Mg(2+). Lys-460 serves as a coordination point for (6S)-5-formyl-5,6,7,8-tetrahydrofolate.

This sequence belongs to the TRAFAC class TrmE-Era-EngA-EngB-Septin-like GTPase superfamily. TrmE GTPase family. Homodimer. Heterotetramer of two MnmE and two MnmG subunits. K(+) is required as a cofactor.

It is found in the cytoplasm. Its function is as follows. Exhibits a very high intrinsic GTPase hydrolysis rate. Involved in the addition of a carboxymethylaminomethyl (cmnm) group at the wobble position (U34) of certain tRNAs, forming tRNA-cmnm(5)s(2)U34. This chain is tRNA modification GTPase MnmE, found in Exiguobacterium sibiricum (strain DSM 17290 / CCUG 55495 / CIP 109462 / JCM 13490 / 255-15).